Consider the following 198-residue polypeptide: MLRSFLLIVATVSLFGQCKPLPLATSPVSDAVRAPHRSTHETRFLRTNDEERGATMTLAGVLRDKAQTKQLLTSWLNSGKSVPSVSNKLGLKRMSLEQAIHHENWKALTTFQRMKSKKAKAYAKYGTGYQTEAKTKENLLQWVMRGDSPKEVSSTLGLLGLSRRKIIDHQNYEAFRTFLKYRKQWAEMQGNGFTKLTT.

A signal peptide spans 1–20 (MLRSFLLIVATVSLFGQCKP). Residues 43–52 (RFLRTNDEER) carry the RxLR-dEER motif.

Belongs to the RxLR effector family. Interacts with host MAP3Kbeta2 in the nucleoplasm.

The protein resides in the secreted. The protein localises to the host nucleus. It localises to the host nucleolus. Functionally, secreted effector that promotes P.infestans colonization of plant host. Specifically suppresses Avr4/Cf4- and AvrPto/Pto-triggered cell death. Targets the potato MAP3Kbeta2 kinase, a positive regulator of cell death associated with plant immunity, and perturbs signaling pathways triggered by MAP3Kbeta2. The protein is Secreted RxLR effector protein PITG_22926 of Phytophthora infestans (strain T30-4) (Potato late blight agent).